The chain runs to 223 residues: Phosphoribosylformylglycinamidine synthase subunit PurQ (223 aa).

In terms of domain architecture, Glutamine amidotransferase type-1 spans 3 to 223 (SAVILLPGLN…LFAGALGITA (221 aa)). Cys87 (nucleophile) is an active-site residue. Active-site residues include His197 and Glu199.

As to quaternary structure, part of the FGAM synthase complex composed of 1 PurL, 1 PurQ and 2 PurS subunits.

The protein localises to the cytoplasm. It catalyses the reaction N(2)-formyl-N(1)-(5-phospho-beta-D-ribosyl)glycinamide + L-glutamine + ATP + H2O = 2-formamido-N(1)-(5-O-phospho-beta-D-ribosyl)acetamidine + L-glutamate + ADP + phosphate + H(+). The enzyme catalyses L-glutamine + H2O = L-glutamate + NH4(+). Its pathway is purine metabolism; IMP biosynthesis via de novo pathway; 5-amino-1-(5-phospho-D-ribosyl)imidazole from N(2)-formyl-N(1)-(5-phospho-D-ribosyl)glycinamide: step 1/2. In terms of biological role, part of the phosphoribosylformylglycinamidine synthase complex involved in the purines biosynthetic pathway. Catalyzes the ATP-dependent conversion of formylglycinamide ribonucleotide (FGAR) and glutamine to yield formylglycinamidine ribonucleotide (FGAM) and glutamate. The FGAM synthase complex is composed of three subunits. PurQ produces an ammonia molecule by converting glutamine to glutamate. PurL transfers the ammonia molecule to FGAR to form FGAM in an ATP-dependent manner. PurS interacts with PurQ and PurL and is thought to assist in the transfer of the ammonia molecule from PurQ to PurL. This is Phosphoribosylformylglycinamidine synthase subunit PurQ from Brucella suis biovar 1 (strain 1330).